The chain runs to 193 residues: MIKISKKAKKYIIKLLSKQELGTNIRIFVDSPGTMYAECGMAYCDMNDIDKKNDHKFSFDFFDVYIHKLMLPFLKDSIIDLVKNDLGTKITLKAPYAKILNKSKNFSQLQNSIKNFLTTQINPKLLLHGGSVALYDITDSGVVFLKFSGGCNGCSMIDITLKKGIEKKLIKNFPEISSVEDVTHHISGKHSYY.

Positions 151 and 154 each coordinate [4Fe-4S] cluster.

It belongs to the NfuA family. Homodimer. It depends on [4Fe-4S] cluster as a cofactor.

Functionally, involved in iron-sulfur cluster biogenesis. Binds a 4Fe-4S cluster, can transfer this cluster to apoproteins, and thereby intervenes in the maturation of Fe/S proteins. Could also act as a scaffold/chaperone for damaged Fe/S proteins. The chain is Fe/S biogenesis protein NfuA from Buchnera aphidicola subsp. Cinara cedri (strain Cc).